The primary structure comprises 60 residues: Large ribosomal subunit protein uL30 (60 aa).

Belongs to the universal ribosomal protein uL30 family. As to quaternary structure, part of the 50S ribosomal subunit.

The polypeptide is Large ribosomal subunit protein uL30 (Paraburkholderia phytofirmans (strain DSM 17436 / LMG 22146 / PsJN) (Burkholderia phytofirmans)).